Consider the following 267-residue polypeptide: Stage 0 sporulation protein A (267 aa).

One can recognise a Response regulatory domain in the interval 5–123; it reads KVCVADDNRE…NLVGHIRQVS (119 aa). Residues aspartate 10, aspartate 11, and aspartate 56 each coordinate Ca(2+). 4-aspartylphosphate is present on aspartate 56. A disordered region spans residues 126 to 150; sequence ASSVTHRAPSSQSSIIRSSQPEPKK. The segment covering 135-145 has biased composition (low complexity); that stretch reads SSQSSIIRSSQ. The segment at residues 199–218 is a DNA-binding region (H-T-H motif); sequence PDIAKKFNTTASRVERAIRH.

As to quaternary structure, interacts with small protein YqaH, which is encoded in the skin prophage-like element. It depends on Ca(2+) as a cofactor. In terms of processing, phosphorylated by KinA and KinB.

It is found in the cytoplasm. May play the central regulatory role in sporulation. It may be an element of the effector pathway responsible for the activation of sporulation genes in response to nutritional stress. Spo0A may act in concert with Spo0H (a sigma factor) to control the expression of some genes that are critical to the sporulation process. Repressor of abrB, activator of the spoIIa operon. Binds the DNA sequence 5'-TGNCGAA-3' (0A box). This is Stage 0 sporulation protein A (spo0A) from Bacillus subtilis (strain 168).